Reading from the N-terminus, the 894-residue chain is Phosphinomethylmalate isomerase (894 aa).

Positions 438, 504, and 507 each coordinate [4Fe-4S] cluster.

This sequence belongs to the aconitase/IPM isomerase family. The cofactor is [4Fe-4S] cluster.

It carries out the reaction phosphinomethylmalate = phosphinomethylisomalate. The enzyme catalyses phosphinomethylmalate = 2-(phosphinatomethylidene)butanedioate + H2O. The catalysed reaction is 2-(phosphinatomethylidene)butanedioate + H2O = phosphinomethylisomalate. It participates in secondary metabolite biosynthesis; bialaphos biosynthesis. Its function is as follows. Isomerase involved in the biosynthesis of phosphinothricin tripeptide (PTT), also known as bialaphos (BA), a natural-product antibiotic and potent herbicide. Probably catalyzes the isomerization of phosphinomethylmalate to phosphinomethylisomalate. Shows no standard aconitase activity with citrate as a substrate and is not able to complement an acnA mutant. In Streptomyces viridochromogenes (strain DSM 40736 / JCM 4977 / BCRC 1201 / Tue 494), this protein is Phosphinomethylmalate isomerase.